A 213-amino-acid polypeptide reads, in one-letter code: Adenylate kinase (213 aa).

10–15 (GAGKGT) lines the ATP pocket. Positions 30-59 (AVGDIFRTIIKTSTSEAELINNYVKQGALI) are NMP. AMP-binding positions include Arg36, 57 to 59 (ALI), 85 to 88 (GYPR), and Gln92. Residues 123–161 (GRYSCKNCGKIYNVHFLQPKTDYVCDVCSSNVFDYRRDD) form an LID region. Residue Arg124 coordinates ATP. Zn(2+) is bound by residues Cys127 and Cys130. 133–134 (IY) serves as a coordination point for ATP. Zn(2+)-binding residues include Cys147 and Cys150. Arg158 and Arg169 together coordinate AMP. Lys197 is an ATP binding site.

Belongs to the adenylate kinase family. Monomer.

The protein resides in the cytoplasm. It catalyses the reaction AMP + ATP = 2 ADP. It functions in the pathway purine metabolism; AMP biosynthesis via salvage pathway; AMP from ADP: step 1/1. In terms of biological role, catalyzes the reversible transfer of the terminal phosphate group between ATP and AMP. Plays an important role in cellular energy homeostasis and in adenine nucleotide metabolism. The chain is Adenylate kinase from Rickettsia typhi (strain ATCC VR-144 / Wilmington).